A 535-amino-acid polypeptide reads, in one-letter code: Potassium channel subfamily K member 10 (535 aa).

Topologically, residues 1 to 68 (MYFSYIGYFF…GLQTVMKWKT (68 aa)) are cytoplasmic. The chain crosses the membrane as a helical span at residues 69–89 (VVAIFVVVVVYLVTGGLVFRA). Positions 151–177 (LGSAFFFAGTVITTIGYGNIAPSTEGG) form an intramembrane region, pore-forming. Residues threonine 164, isoleucine 165, glycine 166, and tyrosine 167 each coordinate K(+). Positions 164–169 (TIGYGN) are selectivity filter 1. A helical membrane pass occupies residues 179–199 (IFCILYAIFGIPLFGFLLAGI). Residues 200–230 (GDQLGTIFGKSIARVEKVFRKKQVSQTKIRV) lie on the Cytoplasmic side of the membrane. Residues 231-251 (ISTILFILAGCIVFVTIPAVI) traverse the membrane as a helical segment. An intramembrane region (pore-forming) is located at residues 260–291 (ALESIYFVVVTLTTVGFGDFVAGGNAGINYRE). K(+)-binding residues include threonine 273, valine 274, glycine 275, and phenylalanine 276. Residues 273-278 (TVGFGD) are selectivity filter 2. A helical transmembrane segment spans residues 296 to 316 (LVWFWILVGLAYFAAVLSMIG). The Cytoplasmic segment spans residues 317 to 535 (DWLRVLSKKT…ENNSLLEDRN (219 aa)). Disordered stretches follow at residues 410 to 438 (QESINNRPNNLRLKGPEQLTKHGQGASED) and 510 to 535 (EMENGMVPTDTKDQGLENNSLLEDRN). Polar residues predominate over residues 525–535 (LENNSLLEDRN).

In terms of assembly, homodimer; disulfide-linked. Forms heterodimers with other 2-pore domain K(+) channel subunits, such as KCNK2, KCNK4 and KCNK18. Detected in dorsal root ganglia (DRG) neurons (at protein level).

The protein localises to the cell membrane. The catalysed reaction is K(+)(in) = K(+)(out). It carries out the reaction Rb(+)(in) = Rb(+)(out). It catalyses the reaction Cs(+)(in) = Cs(+)(out). Its activity is regulated as follows. Activated by stimuli such as mechanical stretch, acidic pH and polyunsaturated free fatty acids. Activated by a dihydroacridine analog, ML67-33. Inhibited by polycationic dye ruthenium red. Selectively activated by T2A3 (2-[(4-chloro-3-methylphenyl)amino] benzoic acid). Functionally, k(+) channel that conducts voltage-dependent outward rectifying currents upon membrane depolarization. Voltage sensing is coupled to K(+) electrochemical gradient in an 'ion flux gating' mode where outward but not inward ion flow opens the gate. Converts to voltage-independent 'leak' conductance mode upon stimulation by various stimuli including mechanical membrane stretch, acidic pH, heat and lipids. Homo- and heterodimerizes to form functional channels with distinct regulatory and gating properties. In trigeminal ganglia sensory neurons, the heterodimer of KCNK10/TREK-2 and KCNK18/TRESK inhibits neuronal firing and neurogenic inflammation by stabilizing the resting membrane potential at K(+) equilibrium potential as well as by regulating the threshold of action potentials and the spike frequency. Permeable to other monovalent ions such as Rb(+) and Cs(+). This chain is Potassium channel subfamily K member 10, found in Mus musculus (Mouse).